The primary structure comprises 200 residues: MYEYIKGTLTHINESYVVIESFGIGYAIMLSERFSVDLRAFMHQEVLIYVHSVIRETEHVLYGFSSRAEKECFRLLISFSGIGPKTGLSILNMFPLQELCSIARLENVKAIASVPGIGKKTAEKLMVDLKQKLPTLMPLYLEEPVVPSSTANSSFKEGIGALMNLGFSRLAADRMMTEAVKELSEEASVAELLPIALRKS.

The segment at 1–65 is domain I; sequence MYEYIKGTLT…ETEHVLYGFS (65 aa). Residues 66 to 144 form a domain II region; it reads SRAEKECFRL…TLMPLYLEEP (79 aa). Positions 145–149 are flexible linker; the sequence is VVPSS. Residues 150–200 form a domain III region; the sequence is TANSSFKEGIGALMNLGFSRLAADRMMTEAVKELSEEASVAELLPIALRKS.

Belongs to the RuvA family. In terms of assembly, homotetramer. Forms an RuvA(8)-RuvB(12)-Holliday junction (HJ) complex. HJ DNA is sandwiched between 2 RuvA tetramers; dsDNA enters through RuvA and exits via RuvB. An RuvB hexamer assembles on each DNA strand where it exits the tetramer. Each RuvB hexamer is contacted by two RuvA subunits (via domain III) on 2 adjacent RuvB subunits; this complex drives branch migration. In the full resolvosome a probable DNA-RuvA(4)-RuvB(12)-RuvC(2) complex forms which resolves the HJ.

It localises to the cytoplasm. Functionally, the RuvA-RuvB-RuvC complex processes Holliday junction (HJ) DNA during genetic recombination and DNA repair, while the RuvA-RuvB complex plays an important role in the rescue of blocked DNA replication forks via replication fork reversal (RFR). RuvA specifically binds to HJ cruciform DNA, conferring on it an open structure. The RuvB hexamer acts as an ATP-dependent pump, pulling dsDNA into and through the RuvAB complex. HJ branch migration allows RuvC to scan DNA until it finds its consensus sequence, where it cleaves and resolves the cruciform DNA. This is Holliday junction branch migration complex subunit RuvA from Chlamydia trachomatis serovar A (strain ATCC VR-571B / DSM 19440 / HAR-13).